The primary structure comprises 337 residues: Nicotinate-nucleotide--dimethylbenzimidazole phosphoribosyltransferase (337 aa).

Catalysis depends on Glu305, which acts as the Proton acceptor.

The protein belongs to the CobT family.

The catalysed reaction is 5,6-dimethylbenzimidazole + nicotinate beta-D-ribonucleotide = alpha-ribazole 5'-phosphate + nicotinate + H(+). Its pathway is nucleoside biosynthesis; alpha-ribazole biosynthesis; alpha-ribazole from 5,6-dimethylbenzimidazole: step 1/2. Its function is as follows. Catalyzes the synthesis of alpha-ribazole-5'-phosphate from nicotinate mononucleotide (NAMN) and 5,6-dimethylbenzimidazole (DMB). This Roseobacter denitrificans (strain ATCC 33942 / OCh 114) (Erythrobacter sp. (strain OCh 114)) protein is Nicotinate-nucleotide--dimethylbenzimidazole phosphoribosyltransferase.